Reading from the N-terminus, the 495-residue chain is GTPase Der (495 aa).

2 consecutive EngA-type G domains span residues 3 to 166 (PVIA…MDAE) and 208 to 381 (IKLA…DCST). GTP is bound by residues 9–16 (GRPNVGKS), 56–60 (DTGGI), 118–121 (NKTD), 214–221 (GRPNVGKS), 261–265 (DTAGV), and 326–329 (NKWD). The region spanning 382–466 (KRVGTSLLTR…PIRIQFKEGE (85 aa)) is the KH-like domain.

This sequence belongs to the TRAFAC class TrmE-Era-EngA-EngB-Septin-like GTPase superfamily. EngA (Der) GTPase family. As to quaternary structure, associates with the 50S ribosomal subunit.

Functionally, GTPase that plays an essential role in the late steps of ribosome biogenesis. This Yersinia pseudotuberculosis serotype O:3 (strain YPIII) protein is GTPase Der.